We begin with the raw amino-acid sequence, 502 residues long: NAD(P)H-quinone oxidoreductase chain 4, chloroplastic (502 aa).

14 consecutive transmembrane segments (helical) span residues 4-24, 37-57, 86-106, 113-131, 136-156, 169-189, 210-230, 244-264, 274-294, 307-327, 332-352, 388-408, 418-438, and 464-484; these read FPWL…IFFV, YTIC…CYHF, GLSI…TLAA, SRLF…VGSF, LLLF…LLSM, FILY…GMGL, GLEI…SPII, HYST…YGLV, AHSI…IYAA, IAYS…SITD, GAIL…FLAG, LALP…GIIT, IVIS…SLSM, and LFVS…PDFV.

The protein belongs to the complex I subunit 4 family.

Its subcellular location is the plastid. The protein resides in the chloroplast thylakoid membrane. The enzyme catalyses a plastoquinone + NADH + (n+1) H(+)(in) = a plastoquinol + NAD(+) + n H(+)(out). The catalysed reaction is a plastoquinone + NADPH + (n+1) H(+)(in) = a plastoquinol + NADP(+) + n H(+)(out). The protein is NAD(P)H-quinone oxidoreductase chain 4, chloroplastic of Calycanthus floridus var. glaucus (Eastern sweetshrub).